The chain runs to 696 residues: Translation initiation factor IF-2 (696 aa).

The region spanning 187–361 is the tr-type G domain; it reads ERPPVVTVMG…EMQEIKGIPD (175 aa). The interval 196–203 is G1; it reads GHVDHGKT. Position 196–203 (196–203) interacts with GTP; it reads GHVDHGKT. The tract at residues 221–225 is G2; it reads GITQS. Residues 242–245 are G3; it reads DTPG. GTP is bound by residues 242–246 and 296–299; these read DTPGH and NKID. The interval 296–299 is G4; it reads NKID. The tract at residues 333–335 is G5; it reads SAK.

It belongs to the TRAFAC class translation factor GTPase superfamily. Classic translation factor GTPase family. IF-2 subfamily.

It localises to the cytoplasm. In terms of biological role, one of the essential components for the initiation of protein synthesis. Protects formylmethionyl-tRNA from spontaneous hydrolysis and promotes its binding to the 30S ribosomal subunits. Also involved in the hydrolysis of GTP during the formation of the 70S ribosomal complex. This Thermosipho africanus (strain TCF52B) protein is Translation initiation factor IF-2.